Here is a 416-residue protein sequence, read N- to C-terminus: Tyrosine--tRNA ligase (416 aa).

Tyr39 is a binding site for L-tyrosine. The short motif at Cys44–Ser53 is the 'HIGH' region element. The L-tyrosine site is built by Tyr176 and Gln180. A 'KMSKS' region motif is present at residues Lys236–Thr240. ATP is bound at residue Lys239. The S4 RNA-binding domain occupies Ile349–Val415.

It belongs to the class-I aminoacyl-tRNA synthetase family. TyrS type 1 subfamily. In terms of assembly, homodimer.

The protein localises to the cytoplasm. It carries out the reaction tRNA(Tyr) + L-tyrosine + ATP = L-tyrosyl-tRNA(Tyr) + AMP + diphosphate + H(+). In terms of biological role, catalyzes the attachment of tyrosine to tRNA(Tyr) in a two-step reaction: tyrosine is first activated by ATP to form Tyr-AMP and then transferred to the acceptor end of tRNA(Tyr). The protein is Tyrosine--tRNA ligase of Wolbachia sp. subsp. Brugia malayi (strain TRS).